Here is a 255-residue protein sequence, read N- to C-terminus: Large ribosomal subunit protein uL4 (255 aa).

This sequence belongs to the universal ribosomal protein uL4 family. Part of the 50S ribosomal subunit.

Functionally, one of the primary rRNA binding proteins, this protein initially binds near the 5'-end of the 23S rRNA. It is important during the early stages of 50S assembly. It makes multiple contacts with different domains of the 23S rRNA in the assembled 50S subunit and ribosome. Forms part of the polypeptide exit tunnel. The polypeptide is Large ribosomal subunit protein uL4 (Thermococcus onnurineus (strain NA1)).